Reading from the N-terminus, the 278-residue chain is 2-heptyl-3-hydroxy-4-quinolone dioxygenase AqdC1 (278 aa).

An AB hydrolase-1 domain is found at 29–158; that stretch reads PTIVMLPGWC…GWVDSCRALF (130 aa). Histidine 103 is a substrate binding site. Histidine 250 serves as the catalytic Proton donor/acceptor.

This sequence belongs to the AB hydrolase superfamily.

It carries out the reaction 2-heptyl-3-hydroxy-4(1H)-quinolone + O2 = N-octanoylanthranilate + CO + H(+). Its function is as follows. Involved in the degradation of the Pseudomonas aeruginosa quorum sensing signal molecules HHQ (2-heptyl-4-quinolone) and PQS (2-heptyl-3-hydroxy-4-quinolone) to anthranilic acid. Catalyzes the cleavage of PQS to form N-octanoylanthranilic acid and carbon monoxide. This is 2-heptyl-3-hydroxy-4-quinolone dioxygenase AqdC1 from Rhodococcus erythropolis (Arthrobacter picolinophilus).